The sequence spans 349 residues: tRNA pseudouridine synthase D (349 aa).

Residue F27 participates in substrate binding. D80 acts as the Nucleophile in catalysis. N129 contacts substrate. In terms of domain architecture, TRUD spans 155–303; that stretch reads GVPNYFGAQR…VEAARRAMLL (149 aa). F329 serves as a coordination point for substrate.

It belongs to the pseudouridine synthase TruD family.

The enzyme catalyses uridine(13) in tRNA = pseudouridine(13) in tRNA. Its function is as follows. Responsible for synthesis of pseudouridine from uracil-13 in transfer RNAs. The sequence is that of tRNA pseudouridine synthase D from Shigella flexneri.